We begin with the raw amino-acid sequence, 152 residues long: Chemokine-like factor (152 aa).

One can recognise an MARVEL domain in the interval 13 to 133; sequence FCFSVKGHVK…DGALIYRKLL (121 aa). Transmembrane regions (helical) follow at residues 45–65, 81–101, and 108–128; these read YIVI…LYVL, IINS…ALIP, and VGGG…GALI.

It belongs to the chemokine-like factor family. Isoform 1, isoform 2, isoform 3 and isoform 4 have highest expression levels in adult spleen, lung, testis, ovary, peripheral blood leukocyte, placenta, pancreas, and in fetal brain, skeletal muscle, thymus and heart. Lower expression levels in adult skeletal muscle, liver, thymus colon, prostate and fetal spleen and liver.

It is found in the secreted. The protein resides in the membrane. Its activity is regulated as follows. Partly inhibited by interleukin 10. In terms of biological role, may play an important role in inflammation and regeneration of skeletal muscle. Essential for embryonic development. Its function is as follows. Has chemotactic response in monocytes, neutrophils and lymphocytes. Binds CCR4. The sequence is that of Chemokine-like factor (CKLF) from Homo sapiens (Human).